A 205-amino-acid polypeptide reads, in one-letter code: Holliday junction branch migration complex subunit RuvA (205 aa).

Residues 1–64 (MIGRLRGIIL…EDAQLLYGFN (64 aa)) are domain I. The domain II stretch occupies residues 65 to 143 (DKQERALFRE…GLNGDLFNNT (79 aa)). The interval 144 to 156 (GDIQLPASNSSQI) is flexible linker. Residues 157-205 (SDADIEAEAASALVALGYKPQEASRLVSKIAKPGADCETLIRDALRAAL) are domain III.

This sequence belongs to the RuvA family. Homotetramer. Forms an RuvA(8)-RuvB(12)-Holliday junction (HJ) complex. HJ DNA is sandwiched between 2 RuvA tetramers; dsDNA enters through RuvA and exits via RuvB. An RuvB hexamer assembles on each DNA strand where it exits the tetramer. Each RuvB hexamer is contacted by two RuvA subunits (via domain III) on 2 adjacent RuvB subunits; this complex drives branch migration. In the full resolvosome a probable DNA-RuvA(4)-RuvB(12)-RuvC(2) complex forms which resolves the HJ.

The protein resides in the cytoplasm. Functionally, the RuvA-RuvB-RuvC complex processes Holliday junction (HJ) DNA during genetic recombination and DNA repair, while the RuvA-RuvB complex plays an important role in the rescue of blocked DNA replication forks via replication fork reversal (RFR). RuvA specifically binds to HJ cruciform DNA, conferring on it an open structure. The RuvB hexamer acts as an ATP-dependent pump, pulling dsDNA into and through the RuvAB complex. HJ branch migration allows RuvC to scan DNA until it finds its consensus sequence, where it cleaves and resolves the cruciform DNA. In Yersinia enterocolitica serotype O:8 / biotype 1B (strain NCTC 13174 / 8081), this protein is Holliday junction branch migration complex subunit RuvA.